Here is a 126-residue protein sequence, read N- to C-terminus: UPF0102 protein DNO_0639 (126 aa).

This sequence belongs to the UPF0102 family.

This Dichelobacter nodosus (strain VCS1703A) protein is UPF0102 protein DNO_0639.